The following is a 56-amino-acid chain: Pituitary adenylate cyclase-activating polypeptide (56 aa).

An important for receptor binding region spans residues Val-42–Leu-50. At Leu-50 the chain carries Leucine amide.

Belongs to the glucagon family. As to quaternary structure, interacts with ADCYAP1R1 (via N-terminal extracellular domain).

Its subcellular location is the secreted. Its function is as follows. PACAP is a neuropeptide involved in diverse array of physiological processes through activating the PACAP subfamily of class B1 G protein-coupled receptors: VIP receptor 1 (VIPR1), VIP receptor 2 (VIPR2), and PACAP type I receptor (ADCYAP1R1). Exerts neuroprotective and general cytoprotective effects due to anti-apoptotic, anti-inflammatory, and antioxidant actions. In Heloderma suspectum (Gila monster), this protein is Pituitary adenylate cyclase-activating polypeptide (Adcyap1).